The chain runs to 196 residues: Small ribosomal subunit protein uS4c (196 aa).

One can recognise an S4 RNA-binding domain in the interval 89-169 (MRLDNIIFRL…LPKHLTIDTV (81 aa)).

Belongs to the universal ribosomal protein uS4 family. As to quaternary structure, part of the 30S ribosomal subunit. Contacts protein S5. The interaction surface between S4 and S5 is involved in control of translational fidelity.

The protein localises to the plastid. It is found in the chloroplast. In terms of biological role, one of the primary rRNA binding proteins, it binds directly to 16S rRNA where it nucleates assembly of the body of the 30S subunit. With S5 and S12 plays an important role in translational accuracy. The chain is Small ribosomal subunit protein uS4c (rps4) from Stipellula capensis (Cape rice grass).